The primary structure comprises 189 residues: UPF0301 protein RP032 (189 aa).

This sequence belongs to the UPF0301 (AlgH) family.

The protein is UPF0301 protein RP032 of Rickettsia prowazekii (strain Madrid E).